Consider the following 223-residue polypeptide: Rho-related protein racE (223 aa).

Residue 18-25 participates in GTP binding; the sequence is GDGAVGKT. The Effector region signature appears at 40-48; the sequence is YVPTVFENY. Residues 65 to 69 and 123 to 126 contribute to the GTP site; these read DTAGQ and TKID. Residues 187 to 223 are disordered; that stretch reads GMDKKSQDGSSSASGVPSGDKPTKGKAGKKKSGCIIL. Basic residues predominate over residues 210–223; sequence KGKAGKKKSGCIIL. At Cys-220 the chain carries Cysteine methyl ester. A lipid anchor (S-geranylgeranyl cysteine) is attached at Cys-220. Positions 221 to 223 are cleaved as a propeptide — removed in mature form; it reads IIL.

Belongs to the small GTPase superfamily. Rho family. As to quaternary structure, interacts with rgaA.

It localises to the cell membrane. Functionally, specifically required for cytokinesis. The protein is Rho-related protein racE (racE) of Dictyostelium discoideum (Social amoeba).